The sequence spans 157 residues: Ribonuclease H (157 aa).

Residues 4 to 146 (KRTEITIYTD…CDKLAVKASQ (143 aa)) enclose the RNase H type-1 domain. Mg(2+) contacts are provided by Asp13, Glu51, Asp73, and Asp138.

This sequence belongs to the RNase H family. As to quaternary structure, monomer. Mg(2+) is required as a cofactor.

The protein localises to the cytoplasm. The catalysed reaction is Endonucleolytic cleavage to 5'-phosphomonoester.. Functionally, endonuclease that specifically degrades the RNA of RNA-DNA hybrids. The polypeptide is Ribonuclease H (Trichodesmium erythraeum (strain IMS101)).